A 195-amino-acid chain; its full sequence is Probable chorismate pyruvate-lyase (195 aa).

Positions 79, 117, and 180 each coordinate substrate.

This sequence belongs to the UbiC family.

The protein resides in the cytoplasm. It catalyses the reaction chorismate = 4-hydroxybenzoate + pyruvate. It participates in cofactor biosynthesis; ubiquinone biosynthesis. Functionally, removes the pyruvyl group from chorismate, with concomitant aromatization of the ring, to provide 4-hydroxybenzoate (4HB) for the ubiquinone pathway. This Ralstonia nicotianae (strain ATCC BAA-1114 / GMI1000) (Ralstonia solanacearum) protein is Probable chorismate pyruvate-lyase.